A 206-amino-acid chain; its full sequence is MATHDSKQLEILQYIYDTVENRGFPPTVREICAAVGLSSTSTVHGHLTRLERKGYLIKDATKPRALEITHAGLDALGIKPKDIPVIGVVTAGQPILAVQDVEDYFPLPPNLASDAGELFMLRVHGTSMINAGILNGDYVIVRKQTTAQNGEIVVAMTDDGEATVKRFFKEDLHYRLQPENDAMDPIILNHVQILGKVVGLYRTNID.

The segment at residues 28–48 (VREICAAVGLSSTSTVHGHLT) is a DNA-binding region (H-T-H motif). Active-site for autocatalytic cleavage activity residues include Ser-127 and Lys-165.

Belongs to the peptidase S24 family. As to quaternary structure, homodimer.

It carries out the reaction Hydrolysis of Ala-|-Gly bond in repressor LexA.. Its function is as follows. Represses a number of genes involved in the response to DNA damage (SOS response), including recA and lexA. In the presence of single-stranded DNA, RecA interacts with LexA causing an autocatalytic cleavage which disrupts the DNA-binding part of LexA, leading to derepression of the SOS regulon and eventually DNA repair. In Lactobacillus delbrueckii subsp. bulgaricus (strain ATCC 11842 / DSM 20081 / BCRC 10696 / JCM 1002 / NBRC 13953 / NCIMB 11778 / NCTC 12712 / WDCM 00102 / Lb 14), this protein is LexA repressor.